Consider the following 191-residue polypeptide: dTTP/UTP pyrophosphatase (191 aa).

The active-site Proton acceptor is the Asp-71.

Belongs to the Maf family. YhdE subfamily. Requires a divalent metal cation as cofactor.

Its subcellular location is the cytoplasm. It carries out the reaction dTTP + H2O = dTMP + diphosphate + H(+). The catalysed reaction is UTP + H2O = UMP + diphosphate + H(+). Functionally, nucleoside triphosphate pyrophosphatase that hydrolyzes dTTP and UTP. May have a dual role in cell division arrest and in preventing the incorporation of modified nucleotides into cellular nucleic acids. The protein is dTTP/UTP pyrophosphatase of Hyphomonas neptunium (strain ATCC 15444).